The primary structure comprises 261 residues: Imidazole glycerol phosphate synthase subunit HisF (261 aa).

Active-site residues include D11 and D130.

The protein belongs to the HisA/HisF family. As to quaternary structure, heterodimer of HisH and HisF.

It localises to the cytoplasm. It carries out the reaction 5-[(5-phospho-1-deoxy-D-ribulos-1-ylimino)methylamino]-1-(5-phospho-beta-D-ribosyl)imidazole-4-carboxamide + L-glutamine = D-erythro-1-(imidazol-4-yl)glycerol 3-phosphate + 5-amino-1-(5-phospho-beta-D-ribosyl)imidazole-4-carboxamide + L-glutamate + H(+). It functions in the pathway amino-acid biosynthesis; L-histidine biosynthesis; L-histidine from 5-phospho-alpha-D-ribose 1-diphosphate: step 5/9. Its function is as follows. IGPS catalyzes the conversion of PRFAR and glutamine to IGP, AICAR and glutamate. The HisF subunit catalyzes the cyclization activity that produces IGP and AICAR from PRFAR using the ammonia provided by the HisH subunit. This chain is Imidazole glycerol phosphate synthase subunit HisF, found in Jannaschia sp. (strain CCS1).